Consider the following 239-residue polypeptide: Purine nucleoside phosphorylase DeoD-type 1 (239 aa).

Residue His-5 coordinates a purine D-ribonucleoside. Residues Gly-21, Arg-25, Arg-44, and 88 to 91 (RVGS) contribute to the phosphate site. A purine D-ribonucleoside is bound by residues 180–182 (EME) and 204–205 (SD). Catalysis depends on Asp-205, which acts as the Proton donor.

The protein belongs to the PNP/UDP phosphorylase family. Homohexamer; trimer of homodimers.

The catalysed reaction is a purine D-ribonucleoside + phosphate = a purine nucleobase + alpha-D-ribose 1-phosphate. The enzyme catalyses a purine 2'-deoxy-D-ribonucleoside + phosphate = a purine nucleobase + 2-deoxy-alpha-D-ribose 1-phosphate. Its function is as follows. Catalyzes the reversible phosphorolytic breakdown of the N-glycosidic bond in the beta-(deoxy)ribonucleoside molecules, with the formation of the corresponding free purine bases and pentose-1-phosphate. This chain is Purine nucleoside phosphorylase DeoD-type 1, found in Vibrio parahaemolyticus serotype O3:K6 (strain RIMD 2210633).